We begin with the raw amino-acid sequence, 269 residues long: Tryptophan synthase alpha chain (269 aa).

Catalysis depends on proton acceptor residues Glu56 and Asp67.

The protein belongs to the TrpA family. Tetramer of two alpha and two beta chains.

It catalyses the reaction (1S,2R)-1-C-(indol-3-yl)glycerol 3-phosphate + L-serine = D-glyceraldehyde 3-phosphate + L-tryptophan + H2O. It functions in the pathway amino-acid biosynthesis; L-tryptophan biosynthesis; L-tryptophan from chorismate: step 5/5. In terms of biological role, the alpha subunit is responsible for the aldol cleavage of indoleglycerol phosphate to indole and glyceraldehyde 3-phosphate. This chain is Tryptophan synthase alpha chain, found in Mycobacterium ulcerans (strain Agy99).